Consider the following 125-residue polypeptide: Fluoride-specific ion channel FluC (125 aa).

The next 4 helical transmembrane spans lie at isoleucine 4–tryptophan 24, alanine 32–alanine 52, phenylalanine 68–isoleucine 88, and leucine 100–leucine 120. Residues glycine 75 and threonine 78 each contribute to the Na(+) site.

The protein belongs to the fluoride channel Fluc/FEX (TC 1.A.43) family.

The protein localises to the cell inner membrane. It catalyses the reaction fluoride(in) = fluoride(out). Na(+) is not transported, but it plays an essential structural role and its presence is essential for fluoride channel function. Its function is as follows. Fluoride-specific ion channel. Important for reducing fluoride concentration in the cell, thus reducing its toxicity. This Rhizobium meliloti (strain 1021) (Ensifer meliloti) protein is Fluoride-specific ion channel FluC.